We begin with the raw amino-acid sequence, 207 residues long: Protein FAM177A1 (207 aa).

Met-1 carries the N-acetylmethionine modification. At Ser-65 the chain carries Phosphoserine. Thr-66 carries the post-translational modification Phosphothreonine. The stretch at 131-170 forms a coiled coil; that stretch reads IDEYYRMKKEEEEEEEENRMSEEAERQYQQNKLQADSIVQ. The tract at residues 142 to 176 is disordered; sequence EEEEEENRMSEEAERQYQQNKLQADSIVQTDQPET. A compositionally biased stretch (polar residues) spans 157–176; it reads QYQQNKLQADSIVQTDQPET.

This sequence belongs to the FAM177 family.

The sequence is that of Protein FAM177A1 (Fam177a1) from Mus musculus (Mouse).